The primary structure comprises 563 residues: MNTFLIDYQRIRTPKKGFSKLFCDYSSESEARTKLLADCFHLDYRKDGDYYRHLGFLASRNFRREALVELLTEQNERFDGSERQQREIEKLRSPRCMAIVTGQQTGLFTGPLYTIYKALTAVVLARKQKELFPEYDFVPVFWIESEDHDFDEASSTVLFSGGGLEQITAEAAHRLPDQMAGATQLGASIGATVQEFLDLLPDTEFKPEIAEILESCYEPGVTFEIAFARTMNRLFREHPLILLSAQDTRFKQLAVEVLCREVETAPASSYDVVAQSSILESMGYPAQTKPRAVNLFYLNQLGQRLKIEQPSPDNFLIVPDRQRYTRHQLLEICQDHPEKFSPNVILRPIVQDAVLPTFAYIGGPGEISYLAQFRKAYEHFGLSMPFVIPRGSFTLVEPKIARTMDKVLKATGRPSFSRRQVYEAVFEDVQELRKSMVSGGDSQKLDALFEQVESEVTRSLSTLEPALVKMDPTLQAALSASSGQITKIIGTIKEKTYRAGRRKHDELLQQLDKAELNLFPDGKPQERSINIFHYLNKYGPSLIGELAKVLQGYSTEAHLIVEL.

Residues 493 to 518 adopt a coiled-coil conformation; the sequence is KEKTYRAGRRKHDELLQQLDKAELNL.

It belongs to the BshC family.

The chain is Putative cysteine ligase BshC from Chlorobaculum tepidum (strain ATCC 49652 / DSM 12025 / NBRC 103806 / TLS) (Chlorobium tepidum).